A 125-amino-acid polypeptide reads, in one-letter code: Apolipoprotein C-IV (125 aa).

A signal peptide spans methionine 1 to cysteine 27.

Belongs to the apolipoprotein C4 family.

It is found in the secreted. May participate in lipoprotein metabolism. The protein is Apolipoprotein C-IV (APOC4) of Plecturocebus moloch (Dusky titi monkey).